Consider the following 338-residue polypeptide: tRNA N6-adenosine threonylcarbamoyltransferase (338 aa).

Positions 111 and 115 each coordinate Fe cation. Substrate is bound by residues 134 to 138, Asp-167, Gly-180, and Asn-272; that span reads LVSGG. Asp-300 contacts Fe cation.

The protein belongs to the KAE1 / TsaD family. Requires Fe(2+) as cofactor.

It is found in the cytoplasm. It catalyses the reaction L-threonylcarbamoyladenylate + adenosine(37) in tRNA = N(6)-L-threonylcarbamoyladenosine(37) in tRNA + AMP + H(+). In terms of biological role, required for the formation of a threonylcarbamoyl group on adenosine at position 37 (t(6)A37) in tRNAs that read codons beginning with adenine. Is involved in the transfer of the threonylcarbamoyl moiety of threonylcarbamoyl-AMP (TC-AMP) to the N6 group of A37, together with TsaE and TsaB. TsaD likely plays a direct catalytic role in this reaction. The sequence is that of tRNA N6-adenosine threonylcarbamoyltransferase from Aliivibrio fischeri (strain MJ11) (Vibrio fischeri).